The sequence spans 280 residues: DegV domain-containing protein CA_C1624 (280 aa).

A DegV domain is found at 4 to 279; it reads IALITDSTSD…PGLLGVVIFK (276 aa). Thr-60 and Ser-93 together coordinate hexadecanoate.

Its function is as follows. May bind long-chain fatty acids, such as palmitate, and may play a role in lipid transport or fatty acid metabolism. The protein is DegV domain-containing protein CA_C1624 of Clostridium acetobutylicum (strain ATCC 824 / DSM 792 / JCM 1419 / IAM 19013 / LMG 5710 / NBRC 13948 / NRRL B-527 / VKM B-1787 / 2291 / W).